A 102-amino-acid chain; its full sequence is MAKQKIRIRLKAYEHRILDQSADKIVETAKRTGADVSGPIPLPTERSLYTVIRATHKYKDSREQFEMRTHKRLIDIVNPTPKTVDALMKLDLPSGVNIEIKL.

This sequence belongs to the universal ribosomal protein uS10 family. In terms of assembly, part of the 30S ribosomal subunit.

Its function is as follows. Involved in the binding of tRNA to the ribosomes. This is Small ribosomal subunit protein uS10 from Enterococcus faecalis (strain ATCC 700802 / V583).